The sequence spans 785 residues: MRVPFSWLKAYVPELESPEVLEERLAGLGFETDRIERVFPIPRGVVFARVLEAHPIPGTRLKRLVLDAGQAVEVVSGAENARKGIGVALALPGTELPGLGQKVGERVIQGVRSFGMALSPRELGVGEYGGGLLEFPEDALPPGTPLAEAWPEEVVLDLEVTPNRPDALGLLGLARDLHALGYALVEPEAALKAEALPLPFALKVEDPEGAPHFTLGYAFGLRVAPSPLWMQRALFAAGMRPINNVVDVTNYVMLERAQPMHAFDLRFIGEGILVRRARPGERLRTLDGVERTLHPEDLVIAGWRGEESFPLGLAGVMGGAESEVREDTEAIALEVACFDPVSIRKTARRHGLRTEASHRFERGVDPLGQVPAQRRALSLLQALAGARVAEALLEAGSPKPPEAIPFRPEYANRLLGTSYPEAEQIAILKRLGCRVEGQGPAYRVTPPSHRLDLRLEEDLVEEVARIQGYETIPLALPAFFPAPDNRGVEAPYRKERRLRELLSGLGFQEVYTYSFMDPEDARRFRLDPPRLLLLNPLAPEKAALRTHLFPGLVRVLKENLDLDRPERALLFEVGRVFREREETHLAGLLFGEGVGLPWAKERLSGYFLLKGYLEALFARLGLAFRVEAQVFPFLHPGVSGRVLVEGEEVGFLGALHPEIAQELELPPVHLFELRLPLPDKPLAFQDPSRHPAAFRDLAVVVPAPTPYGEVEALVREAAGPYLESLVLFDLYQGPPLPEGHKSLAFHLRFRHPKRTLRDEEVEEAVSRVAEALRARGFGLRGLDTP.

The region spanning 39-147 is the tRNA-binding domain; sequence FPIPRGVVFA…DALPPGTPLA (109 aa). The region spanning 399 to 474 is the B5 domain; the sequence is KPPEAIPFRP…RIQGYETIPL (76 aa). 4 residues coordinate Mg(2+): Asp452, Asp458, Glu461, and Glu462. In terms of domain architecture, FDX-ACB spans 688–780; that stretch reads SRHPAAFRDL…ALRARGFGLR (93 aa).

This sequence belongs to the phenylalanyl-tRNA synthetase beta subunit family. Type 1 subfamily. As to quaternary structure, tetramer of two alpha and two beta subunits. Requires Mg(2+) as cofactor.

The protein resides in the cytoplasm. It catalyses the reaction tRNA(Phe) + L-phenylalanine + ATP = L-phenylalanyl-tRNA(Phe) + AMP + diphosphate + H(+). The chain is Phenylalanine--tRNA ligase beta subunit from Thermus thermophilus (strain ATCC BAA-163 / DSM 7039 / HB27).